Here is a 349-residue protein sequence, read N- to C-terminus: Hydroxymethylglutaryl-CoA synthase (349 aa).

(3S)-3-hydroxy-3-methylglutaryl-CoA-binding residues include D30 and A31. Residue E82 is the Proton donor/acceptor of the active site. C114 and T155 together coordinate (3S)-3-hydroxy-3-methylglutaryl-CoA. The active-site Acyl-thioester intermediate is the C114. CoA is bound at residue R203. T205 and H238 together coordinate (3S)-3-hydroxy-3-methylglutaryl-CoA. The active-site Proton donor/acceptor is H238. K243 contacts CoA. (3S)-3-hydroxy-3-methylglutaryl-CoA is bound by residues N270 and S300.

It belongs to the thiolase-like superfamily. Archaeal HMG-CoA synthase family. In terms of assembly, interacts with acetoacetyl-CoA thiolase that catalyzes the precedent step in the pathway and with a DUF35 protein. The acetoacetyl-CoA thiolase/HMG-CoA synthase complex channels the intermediate via a fused CoA-binding site, which allows for efficient coupling of the endergonic thiolase reaction with the exergonic HMGCS reaction.

It carries out the reaction acetoacetyl-CoA + acetyl-CoA + H2O = (3S)-3-hydroxy-3-methylglutaryl-CoA + CoA + H(+). The protein operates within metabolic intermediate biosynthesis; (R)-mevalonate biosynthesis; (R)-mevalonate from acetyl-CoA: step 2/3. In terms of biological role, catalyzes the condensation of acetyl-CoA with acetoacetyl-CoA to form 3-hydroxy-3-methylglutaryl-CoA (HMG-CoA). Functions in the mevalonate (MVA) pathway leading to isopentenyl diphosphate (IPP), a key precursor for the biosynthesis of isoprenoid compounds that are building blocks of archaeal membrane lipids. This Methanococcus maripaludis (strain DSM 14266 / JCM 13030 / NBRC 101832 / S2 / LL) protein is Hydroxymethylglutaryl-CoA synthase.